We begin with the raw amino-acid sequence, 1323 residues long: MRYPPSIGSILLIIPIFLTFFGNSNAQLWKRCVSPQDCLCSGTTNGISRYGTGNILEDLETMYRGCRRVYGNLEITWIEANEIKKWRESTNSTVDPKNEDSPLKSINFFDNLEEIRGSLIIYRANIQKISFPRLRVIYGDEVFHDNALYIHKNDKVHEVVMRELRVIRNGSVTIQDNPKMCYIGDKIDWKELLYDPDVQKVETTNSHQHCYQNGKSMAKCHESCNDKCWGSGDNDCQRVYRSVCPKSCSQCFYSNSTSSYECCDSACLGGCTGHGPKNCIACSKYELDGICIETCPSRKIFNHKTGRLVFNPDGRYQNGNHCVKECPPELLIENDVCVRHCSDGHHYDATKDVRECEKCRSSSCPKICTVDGHLTNETLKNLEGCEQIDGHLIIEHAFTYEQLKVLETVKIVSEYITIVQQNFYDLKFLKNLQIIEGRKLHNVRWALAIYQCDDLEELSLNSLKLIKTGAVLIMKNHRLCYVSKIDWSSIITSKGKDNKPSLAIAENRDSKLCETEQRVCDKNCNKRGCWGKEPEDCLECKTWKSVGTCVEKCDTKGFLRNQTSMKCERCSPECETCNGLGELDCLTCRHKTLYNSDFGNRMECVHDCPVSHFPTQKNVCEKCHPTCYDNGCTGPDSNLGYGGCKQCKYAVKYENDTIFCLQSSGMNNVCVENDLPNYYISTYDTEGVIETHCEKCSISCKTCSSAGRNVVQNKCVCKHVEYQPNPSERICMDQCPVNSFMVPDTNNTVCKKCHHECDQNYHCANGQSTGCQKCKNFTVFKGDIAQCVSECPKNLPFSNPANGECLDYDIASRQRKTRMVIIGSVLFGFAVMFLFILLVYWRCQRIGKKLKIAEMVDMPELTPIDASVRPNMSRICLIPSSELQTKLDKKLGAGAFGTVFAGIYYPKRAKNVKIPVAIKVFQTDQSQTDEMLEEATNMFRLRHDNLLKIIGFCMHDDGLKIVTIYRPLGNLQNFLKLHKENLGAREQVLYCYQIASGMQYLEKQRVVHRDLATRNVLVKKFNHVEITDFGLSKILKHDADSITIKSGKVAIKWLAIEIFSKHCYTHASDVWAFGVTCWEIITFGQSPYQGMSTDSIHNFLKDGNRLSQPPNCSQDLYQELLRCWMADPKSRPGFEILYERFKEFCKVPQLFLENSNKISESDLSAEERFQTERIREMFDGNIDPQMYFDQGSLPSMPSSPTSMATFTIPHGDLMNRMQSVNSSRYKTEPFDYGSTAQEDNSYLIPKTKEVQQSAVLYTAVTNEDGQTELSPSNGDYYNQPNTPSSSSGYYNEPHLKTKKPETSEEAEAVQYENEEVSQKETCL.

The N-terminal stretch at 1–20 (MRYPPSIGSILLIIPIFLTF) is a signal peptide. Residues 21 to 818 (FGNSNAQLWK…DIASRQRKTR (798 aa)) lie on the Extracellular side of the membrane. N-linked (GlcNAc...) asparagine glycans are attached at residues N91 and N169. Intrachain disulfides connect C220–C228, C224–C236, C244–C251, C248–C262, C263–C271, C267–C279, C282–C291, C295–C322, C326–C337, C341–C356, and C359–C364. An N-linked (GlcNAc...) asparagine glycan is attached at N255. An N-linked (GlcNAc...) asparagine glycan is attached at N376. 20 disulfide bridges follow: C520–C529, C524–C537, C540–C549, C553–C567, C570–C577, C574–C585, C588–C604, C608–C620, C623–C632, C627–C644, C647–C660, C670–C693, C696–C703, C700–C715, C717–C731, C735–C750, C753–C763, C757–C771, C774–C787, and C791–C805. N-linked (GlcNAc...) asparagine glycosylation is present at N561. N-linked (GlcNAc...) asparagine glycosylation occurs at N655. A glycan (N-linked (GlcNAc...) asparagine) is linked at N746. N-linked (GlcNAc...) asparagine glycosylation is present at N776. The helical transmembrane segment at 819-839 (MVIIGSVLFGFAVMFLFILLV) threads the bilayer. Residues 840–1323 (YWRCQRIGKK…EEVSQKETCL (484 aa)) are Cytoplasmic-facing. In terms of domain architecture, Protein kinase spans 885-1152 (TKLDKKLGAG…EFCKVPQLFL (268 aa)). ATP is bound by residues 891-899 (LGAGAFGTV) and K919. The active-site Proton acceptor is D1010. Positions 1265–1289 (GQTELSPSNGDYYNQPNTPSSSSGY) are enriched in polar residues. Residues 1265-1323 (GQTELSPSNGDYYNQPNTPSSSSGYYNEPHLKTKKPETSEEAEAVQYENEEVSQKETCL) are disordered. Over residues 1293 to 1302 (PHLKTKKPET) the composition is skewed to basic and acidic residues. Acidic residues predominate over residues 1303–1315 (SEEAEAVQYENEE).

This sequence belongs to the protein kinase superfamily. Tyr protein kinase family. EGF receptor subfamily. In terms of tissue distribution, expressed in vulval precursor cells (at protein level). Expressed in ALA neurons, 2 ventral head neurons, a single neuron in the tail, pharyngeal-intestinal valve and posterior arcade epithelial cells.

It is found in the apical cell membrane. The protein localises to the basolateral cell membrane. It carries out the reaction L-tyrosyl-[protein] + ATP = O-phospho-L-tyrosyl-[protein] + ADP + H(+). In terms of biological role, tyrosine-protein kinase receptor which, upon binding ligand lin-3, activates 2 signaling cascades: the let-60/Ras and MAP kinase signaling pathway and the let-60-independent phospholipase C-mediated Ca(2+) signaling pathway. Each pathway regulates distinct functions. By activating let-60/Ras, regulates larval development, induction of vulva cell precursors during vulva development, male spicule formation and posterior development of the epidermis. Probably by activating phospholipase plc-3 and inositol 1,4,5-trisphosphate receptor itr-1 signaling cascade downstream of ligand lin-3, plays a role in ovulation by promoting ovulatory gonadal sheath cell contractions. Probably by regulating neuronal transmission in ALA neurons, mediates, independently of let-60/Ras, the decrease in pharyngeal pumping and locomotion during the quiescent state that precedes each larval molt, downstream of lin-3 and upstream of plc-3. The sequence is that of Receptor tyrosine-protein kinase let-23 from Caenorhabditis elegans.